The following is a 398-amino-acid chain: Nucleotide-sugar uncharacterized transporter 2 (398 aa).

10 consecutive transmembrane segments (helical) span residues 54 to 74 (FCGP…IILA), 84 to 104 (FNFP…LLAF), 119 to 139 (TTPF…SGLA), 150 to 170 (FYQM…FVLF), 179 to 199 (VMAL…DLEF), 201 to 221 (LFGA…KILW), 242 to 262 (FTVF…VLLF), 271 to 291 (AILI…LALG), 299 to 319 (VVLG…IFGS), and 322 to 342 (GFIS…YTWL).

This sequence belongs to the TPT transporter family. TPT (TC 2.A.7.9) subfamily.

It localises to the membrane. The sequence is that of Nucleotide-sugar uncharacterized transporter 2 from Arabidopsis thaliana (Mouse-ear cress).